We begin with the raw amino-acid sequence, 208 residues long: Uracil phosphoribosyltransferase (208 aa).

Residues R78, R103, and 130–138 each bind 5-phospho-alpha-D-ribose 1-diphosphate; that span reads DPMLATGGS. Uracil-binding positions include I193 and 198-200; that span reads GDA. D199 contacts 5-phospho-alpha-D-ribose 1-diphosphate.

The protein belongs to the UPRTase family. It depends on Mg(2+) as a cofactor.

It catalyses the reaction UMP + diphosphate = 5-phospho-alpha-D-ribose 1-diphosphate + uracil. The protein operates within pyrimidine metabolism; UMP biosynthesis via salvage pathway; UMP from uracil: step 1/1. Allosterically activated by GTP. Catalyzes the conversion of uracil and 5-phospho-alpha-D-ribose 1-diphosphate (PRPP) to UMP and diphosphate. This chain is Uracil phosphoribosyltransferase, found in Haemophilus influenzae (strain PittEE).